The sequence spans 187 residues: UPF0301 protein Spro_4027 (187 aa).

It belongs to the UPF0301 (AlgH) family.

This is UPF0301 protein Spro_4027 from Serratia proteamaculans (strain 568).